The following is a 126-amino-acid chain: uncharacterized protein (126 aa).

Residues 48–68 (ILCMFPWQCVVYVFSNFVWLV) traverse the membrane as a helical segment.

The protein localises to the membrane. This is an uncharacterized protein from Homo sapiens (Human).